Here is a 458-residue protein sequence, read N- to C-terminus: tRNA(Ile)-lysidine synthase (458 aa).

36–41 (SGGADS) contacts ATP.

This sequence belongs to the tRNA(Ile)-lysidine synthase family.

Its subcellular location is the cytoplasm. It carries out the reaction cytidine(34) in tRNA(Ile2) + L-lysine + ATP = lysidine(34) in tRNA(Ile2) + AMP + diphosphate + H(+). Functionally, ligates lysine onto the cytidine present at position 34 of the AUA codon-specific tRNA(Ile) that contains the anticodon CAU, in an ATP-dependent manner. Cytidine is converted to lysidine, thus changing the amino acid specificity of the tRNA from methionine to isoleucine. The polypeptide is tRNA(Ile)-lysidine synthase (Protochlamydia amoebophila (strain UWE25)).